A 448-amino-acid chain; its full sequence is Exodeoxyribonuclease 7 large subunit (448 aa).

Belongs to the XseA family. Heterooligomer composed of large and small subunits.

The protein localises to the cytoplasm. The catalysed reaction is Exonucleolytic cleavage in either 5'- to 3'- or 3'- to 5'-direction to yield nucleoside 5'-phosphates.. In terms of biological role, bidirectionally degrades single-stranded DNA into large acid-insoluble oligonucleotides, which are then degraded further into small acid-soluble oligonucleotides. This chain is Exodeoxyribonuclease 7 large subunit, found in Hamiltonella defensa subsp. Acyrthosiphon pisum (strain 5AT).